The following is a 223-amino-acid chain: HTH-type transcriptional dual regulator CecR (223 aa).

The HTH tetR-type domain maps to 11–70 (EQAKKQLIAAALAQFGEYGMNATTREIAAQAGQNIAAITYYFGSKEDLYLACAQWIADFI). Positions 33–52 (TTREIAAQAGQNIAAITYYF) form a DNA-binding region, H-T-H motif.

The protein resides in the cytoplasm. Functionally, regulates transcription of the cecR-ybhGFSR operon and the rhlE gene, which altogether are involved in the control of sensitivity to cefoperazone and chloramphenicol. Represses the cecR-ybhGFSR operon and activates the rhlE operon. Acts by binding to a palindromic sequence within the intergenic spacer located between these two divergently transcribed operons. The polypeptide is HTH-type transcriptional dual regulator CecR (Shigella flexneri).